Reading from the N-terminus, the 173-residue chain is Translation initiation factor IF-3 (173 aa).

The protein belongs to the IF-3 family. Monomer.

It is found in the cytoplasm. IF-3 binds to the 30S ribosomal subunit and shifts the equilibrium between 70S ribosomes and their 50S and 30S subunits in favor of the free subunits, thus enhancing the availability of 30S subunits on which protein synthesis initiation begins. The sequence is that of Translation initiation factor IF-3 from Ehrlichia ruminantium (strain Gardel).